The sequence spans 571 residues: Plastidial pyruvate kinase 3, chloroplastic (571 aa).

The transit peptide at 1-55 (MAAYGQISSGMTVDPQVLSSSRNIGVSLSPLRRTLIGAGVRSTSISLRQCSLSVR) directs the protein to the chloroplast. A substrate-binding site is contributed by R129. 4 residues coordinate K(+): N131, S133, D164, and T165. 131-134 (NMSH) provides a ligand contact to ATP. An ATP-binding site is contributed by R171. K314 serves as a coordination point for substrate. E316 serves as a coordination point for Mg(2+). Residues G339, D340, and T372 each contribute to the substrate site. Position 340 (D340) interacts with Mg(2+).

It belongs to the pyruvate kinase family. As to quaternary structure, oligomer of alpha and beta subunits. Mg(2+) serves as cofactor. Requires K(+) as cofactor. As to expression, expressed at low levels in roots, leaves, inflorescences, siliques, pollen, seeds and flowers.

It localises to the plastid. The protein resides in the chloroplast stroma. It catalyses the reaction pyruvate + ATP = phosphoenolpyruvate + ADP + H(+). The protein operates within carbohydrate degradation; glycolysis; pyruvate from D-glyceraldehyde 3-phosphate: step 5/5. Required for plastidial pyruvate kinase activity. The polypeptide is Plastidial pyruvate kinase 3, chloroplastic (PKP3) (Arabidopsis thaliana (Mouse-ear cress)).